A 285-amino-acid chain; its full sequence is Probable endonuclease 4 (285 aa).

Residues H69, H109, E145, D179, H182, H216, D229, H231, and E261 each coordinate Zn(2+).

Belongs to the AP endonuclease 2 family. The cofactor is Zn(2+).

The catalysed reaction is Endonucleolytic cleavage to 5'-phosphooligonucleotide end-products.. In terms of biological role, endonuclease IV plays a role in DNA repair. It cleaves phosphodiester bonds at apurinic or apyrimidinic (AP) sites, generating a 3'-hydroxyl group and a 5'-terminal sugar phosphate. In Escherichia coli (strain SMS-3-5 / SECEC), this protein is Probable endonuclease 4.